We begin with the raw amino-acid sequence, 449 residues long: Probable cysteine proteinase 224L (449 aa).

Residues C99, H292, and N322 contribute to the active site. Residues 429–449 (DTQIVFIFFLSVVILFIFIIL) traverse the membrane as a helical segment.

The protein belongs to the peptidase C1 family.

It localises to the membrane. Probable cysteine protease. This chain is Probable cysteine proteinase 224L, found in Acheta domesticus (House cricket).